The primary structure comprises 375 residues: Probable protein-glutamate methylesterase BB_0415 (375 aa).

The Response regulatory domain maps to 6–120; it reads SVLIIEYFAV…SHEIKKEQII (115 aa). One can recognise a CheB-type methylesterase domain in the interval 183–375; sequence KLRKFDIIAI…KLLKAILINS (193 aa). Active-site residues include S195, H221, and D317.

It carries out the reaction [protein]-L-glutamate 5-O-methyl ester + H2O = L-glutamyl-[protein] + methanol + H(+). The protein is Probable protein-glutamate methylesterase BB_0415 of Borreliella burgdorferi (strain ATCC 35210 / DSM 4680 / CIP 102532 / B31) (Borrelia burgdorferi).